Here is a 199-residue protein sequence, read N- to C-terminus: Recombination protein RecR (199 aa).

The segment at 57–72 (CNLCNNFSEQEICPLC) adopts a C4-type zinc-finger fold. Positions 80-175 (TLLCIVEMPS…QVSRIARGLP (96 aa)) constitute a Toprim domain.

The protein belongs to the RecR family.

May play a role in DNA repair. It seems to be involved in an RecBC-independent recombinational process of DNA repair. It may act with RecF and RecO. This chain is Recombination protein RecR, found in Methylobacillus flagellatus (strain ATCC 51484 / DSM 6875 / VKM B-1610 / KT).